The sequence spans 347 residues: NADH-ubiquinone oxidoreductase chain 2 (347 aa).

11 helical membrane passes run 3 to 23 (PLIF…VMTT), 25 to 45 (HWVM…PILM), 59 to 79 (YFLT…INLT), 96 to 116 (IIMT…FWVP), 122 to 142 (VQLS…MSIL), 149 to 169 (INLD…GWGG), 178 to 198 (ILAY…VYNP), 201 to 221 (ALLN…MLMV), 237 to 257 (MPLL…LPPL), 274 to 294 (DSMI…YFYM), and 326 to 346 (LSPL…LALL).

This sequence belongs to the complex I subunit 2 family. As to quaternary structure, core subunit of respiratory chain NADH dehydrogenase (Complex I) which is composed of 45 different subunits. Interacts with TMEM242.

Its subcellular location is the mitochondrion inner membrane. The catalysed reaction is a ubiquinone + NADH + 5 H(+)(in) = a ubiquinol + NAD(+) + 4 H(+)(out). Functionally, core subunit of the mitochondrial membrane respiratory chain NADH dehydrogenase (Complex I) which catalyzes electron transfer from NADH through the respiratory chain, using ubiquinone as an electron acceptor. Essential for the catalytic activity and assembly of complex I. This chain is NADH-ubiquinone oxidoreductase chain 2, found in Nyctimene aello (Broad-striped tube-nosed fruit bat).